A 477-amino-acid chain; its full sequence is Probable periplasmic serine endoprotease DegP-like (477 aa).

The first 27 residues, 1 to 27 (MSIPRLKSYLMMFAAVLMLGQVLTAQA), serve as a signal peptide directing secretion. Active-site charge relay system residues include His-117, Asp-147, and Ser-220. Residues 218-220 (GNS) and 275-279 (LGVVI) each bind substrate. 2 PDZ domains span residues 264–355 (LKKD…IRNG) and 361–466 (DISV…LRQG).

The protein belongs to the peptidase S1C family.

It localises to the periplasm. It catalyses the reaction Acts on substrates that are at least partially unfolded. The cleavage site P1 residue is normally between a pair of hydrophobic residues, such as Val-|-Val.. Might be efficient in the degradation of transiently denatured and unfolded proteins which accumulate in the periplasm following stress conditions. The sequence is that of Probable periplasmic serine endoprotease DegP-like from Pseudomonas putida (strain ATCC 700007 / DSM 6899 / JCM 31910 / BCRC 17059 / LMG 24140 / F1).